The chain runs to 213 residues: 3-isopropylmalate dehydratase small subunit (213 aa).

Belongs to the LeuD family. LeuD type 1 subfamily. As to quaternary structure, heterodimer of LeuC and LeuD.

It catalyses the reaction (2R,3S)-3-isopropylmalate = (2S)-2-isopropylmalate. The protein operates within amino-acid biosynthesis; L-leucine biosynthesis; L-leucine from 3-methyl-2-oxobutanoate: step 2/4. Catalyzes the isomerization between 2-isopropylmalate and 3-isopropylmalate, via the formation of 2-isopropylmaleate. This chain is 3-isopropylmalate dehydratase small subunit, found in Magnetococcus marinus (strain ATCC BAA-1437 / JCM 17883 / MC-1).